A 392-amino-acid polypeptide reads, in one-letter code: Probable tRNA sulfurtransferase (392 aa).

The THUMP domain maps to 59–167 (ADITDRVKKV…DQAFVFSNKI (109 aa)). ATP contacts are provided by residues 184 to 185 (LL), 209 to 210 (HF), arginine 266, glycine 288, and glutamine 297.

It belongs to the ThiI family.

It localises to the cytoplasm. The catalysed reaction is [ThiI sulfur-carrier protein]-S-sulfanyl-L-cysteine + a uridine in tRNA + 2 reduced [2Fe-2S]-[ferredoxin] + ATP + H(+) = [ThiI sulfur-carrier protein]-L-cysteine + a 4-thiouridine in tRNA + 2 oxidized [2Fe-2S]-[ferredoxin] + AMP + diphosphate. It carries out the reaction [ThiS sulfur-carrier protein]-C-terminal Gly-Gly-AMP + S-sulfanyl-L-cysteinyl-[cysteine desulfurase] + AH2 = [ThiS sulfur-carrier protein]-C-terminal-Gly-aminoethanethioate + L-cysteinyl-[cysteine desulfurase] + A + AMP + 2 H(+). Its pathway is cofactor biosynthesis; thiamine diphosphate biosynthesis. In terms of biological role, catalyzes the ATP-dependent transfer of a sulfur to tRNA to produce 4-thiouridine in position 8 of tRNAs, which functions as a near-UV photosensor. Also catalyzes the transfer of sulfur to the sulfur carrier protein ThiS, forming ThiS-thiocarboxylate. This is a step in the synthesis of thiazole, in the thiamine biosynthesis pathway. The sulfur is donated as persulfide by IscS. This is Probable tRNA sulfurtransferase from Alkaliphilus oremlandii (strain OhILAs) (Clostridium oremlandii (strain OhILAs)).